The chain runs to 508 residues: Glycerol kinase (508 aa).

ADP is bound at residue T14. The ATP site is built by T14, T15, and S16. T14 contributes to the sn-glycerol 3-phosphate binding site. An ADP-binding site is contributed by R18. Sn-glycerol 3-phosphate-binding residues include R84, E85, Y134, and D247. R84, E85, Y134, D247, and Q248 together coordinate glycerol. 2 residues coordinate ADP: T269 and G313. Positions 269, 313, 317, and 416 each coordinate ATP. ADP is bound at residue G416.

The protein belongs to the FGGY kinase family.

It carries out the reaction glycerol + ATP = sn-glycerol 3-phosphate + ADP + H(+). Its pathway is polyol metabolism; glycerol degradation via glycerol kinase pathway; sn-glycerol 3-phosphate from glycerol: step 1/1. With respect to regulation, inhibited by fructose 1,6-bisphosphate (FBP). In terms of biological role, key enzyme in the regulation of glycerol uptake and metabolism. Catalyzes the phosphorylation of glycerol to yield sn-glycerol 3-phosphate. The sequence is that of Glycerol kinase from Mycoplasmoides gallisepticum (strain R(low / passage 15 / clone 2)) (Mycoplasma gallisepticum).